A 492-amino-acid polypeptide reads, in one-letter code: Catalase isozyme 2 (492 aa).

Catalysis depends on residues histidine 65 and asparagine 138. Heme is bound at residue tyrosine 348.

Belongs to the catalase family. As to quaternary structure, homotetramer. Heme is required as a cofactor.

It localises to the peroxisome. The enzyme catalyses 2 H2O2 = O2 + 2 H2O. Occurs in almost all aerobically respiring organisms and serves to protect cells from the toxic effects of hydrogen peroxide. The chain is Catalase isozyme 2 (CAT2) from Nicotiana plumbaginifolia (Leadwort-leaved tobacco).